A 480-amino-acid polypeptide reads, in one-letter code: Cytochrome b-c1 complex subunit 1, mitochondrial (480 aa).

The transit peptide at 1–34 (MAASAVCRAACSGTQALLRTCRSPALLRLPALRG) directs the protein to the mitochondrion. N6-acetyllysine is present on residues K111 and K138. The residue at position 163 (K163) is an N6-acetyllysine; alternate. An N6-succinyllysine; alternate modification is found at K163. S212 is subject to Phosphoserine. Position 214 is a phosphothreonine (T214).

The protein belongs to the peptidase M16 family. UQCRC1/QCR1 subfamily. In terms of assembly, component of the ubiquinol-cytochrome c oxidoreductase (cytochrome b-c1 complex, complex III, CIII), a multisubunit enzyme composed of 11 subunits. The complex is composed of 3 respiratory subunits cytochrome b, cytochrome c1 and Rieske protein UQCRFS1, 2 core protein subunits UQCRC1/QCR1 and UQCRC2/QCR2, and 6 low-molecular weight protein subunits UQCRH/QCR6, UQCRB/QCR7, UQCRQ/QCR8, UQCR10/QCR9, UQCR11/QCR10 and subunit 9, the cleavage product of Rieske protein UQCRFS1. The complex exists as an obligatory dimer and forms supercomplexes (SCs) in the inner mitochondrial membrane with NADH-ubiquinone oxidoreductase (complex I, CI) and cytochrome c oxidase (complex IV, CIV), resulting in different assemblies (supercomplex SCI(1)III(2)IV(1) and megacomplex MCI(2)III(2)IV(2)). Interacts with UQCC6. Interacts with STMP1.

The protein localises to the mitochondrion inner membrane. In terms of biological role, component of the ubiquinol-cytochrome c oxidoreductase, a multisubunit transmembrane complex that is part of the mitochondrial electron transport chain which drives oxidative phosphorylation. The respiratory chain contains 3 multisubunit complexes succinate dehydrogenase (complex II, CII), ubiquinol-cytochrome c oxidoreductase (cytochrome b-c1 complex, complex III, CIII) and cytochrome c oxidase (complex IV, CIV), that cooperate to transfer electrons derived from NADH and succinate to molecular oxygen, creating an electrochemical gradient over the inner membrane that drives transmembrane transport and the ATP synthase. The cytochrome b-c1 complex catalyzes electron transfer from ubiquinol to cytochrome c, linking this redox reaction to translocation of protons across the mitochondrial inner membrane, with protons being carried across the membrane as hydrogens on the quinol. In the process called Q cycle, 2 protons are consumed from the matrix, 4 protons are released into the intermembrane space and 2 electrons are passed to cytochrome c. The 2 core subunits UQCRC1/QCR1 and UQCRC2/QCR2 are homologous to the 2 mitochondrial-processing peptidase (MPP) subunits beta-MPP and alpha-MPP respectively, and they seem to have preserved their MPP processing properties. May be involved in the in situ processing of UQCRFS1 into the mature Rieske protein and its mitochondrial targeting sequence (MTS)/subunit 9 when incorporated into complex III. Seems to play an important role in the maintenance of proper mitochondrial function in nigral dopaminergic neurons. This Rattus norvegicus (Rat) protein is Cytochrome b-c1 complex subunit 1, mitochondrial (Uqcrc1).